A 233-amino-acid chain; its full sequence is Small ribosomal subunit protein uS3 (233 aa).

In terms of domain architecture, KH type-2 spans 28–96 (EFADNLDSDF…LRKVVADIAG (69 aa)).

Belongs to the universal ribosomal protein uS3 family. In terms of assembly, part of the 30S ribosomal subunit. Forms a tight complex with proteins S10 and S14.

Functionally, binds the lower part of the 30S subunit head. Binds mRNA in the 70S ribosome, positioning it for translation. The chain is Small ribosomal subunit protein uS3 from Shigella flexneri.